Consider the following 195-residue polypeptide: uncharacterized protein (195 aa).

The next 4 helical transmembrane spans lie at 89–106 (SWIS…PLLP), 111–128 (HLPL…VWKR), 149–168 (VKIS…VLLL), and 172–194 (LNAL…FLNI).

Its subcellular location is the cell membrane. This is an uncharacterized protein from Bacillus subtilis (strain 168).